Consider the following 220-residue polypeptide: PKHD-type hydroxylase PCC7424_1929 (220 aa).

In terms of domain architecture, Fe2OG dioxygenase spans lysine 77–serine 173. 3 residues coordinate Fe cation: histidine 95, aspartate 97, and histidine 154. Arginine 164 contributes to the 2-oxoglutarate binding site.

It depends on Fe(2+) as a cofactor. The cofactor is L-ascorbate.

This chain is PKHD-type hydroxylase PCC7424_1929, found in Gloeothece citriformis (strain PCC 7424) (Cyanothece sp. (strain PCC 7424)).